Here is a 338-residue protein sequence, read N- to C-terminus: MLTLGLESSCDETSCSLVQNGKILANKIASQDIHASYGGVIPELASRAHLQTFPELLTAATQSAGVSLEDIELISVANTPGLIGALSIGVNFAKGLASGLKRPLIGVNHVEAHLYAACMEAPATQFPALGLAISGAHTSLFLMPDATTFLLIGKTRDDAIGETFDKVARFLGLPYPGGQKLEELAREGDADAFAFSPARVSGYDFSFSGLKTAVLYALKGNNSSAKAPFPEVSETQKRNIAASFQKAVFMTIAQKLPDIVKTFSCESLIVGGGVANNSYFRRLLNQICSLPIYFPSSQLCSDNAAMIAGLGERLFCNRTHVSKEVIPCARYQWESACS.

Fe cation-binding residues include H109 and H113. Substrate contacts are provided by residues 132–136, D165, G178, and N277; that span reads AISGA. Position 302 (D302) interacts with Fe cation.

This sequence belongs to the KAE1 / TsaD family. The cofactor is Fe(2+).

It is found in the cytoplasm. The catalysed reaction is L-threonylcarbamoyladenylate + adenosine(37) in tRNA = N(6)-L-threonylcarbamoyladenosine(37) in tRNA + AMP + H(+). In terms of biological role, required for the formation of a threonylcarbamoyl group on adenosine at position 37 (t(6)A37) in tRNAs that read codons beginning with adenine. Is involved in the transfer of the threonylcarbamoyl moiety of threonylcarbamoyl-AMP (TC-AMP) to the N6 group of A37, together with TsaE and TsaB. TsaD likely plays a direct catalytic role in this reaction. The chain is tRNA N6-adenosine threonylcarbamoyltransferase from Chlamydia trachomatis serovar A (strain ATCC VR-571B / DSM 19440 / HAR-13).